Here is a 411-residue protein sequence, read N- to C-terminus: MRFIEEFINKGYFHQCTDLDRLTAITKETKIAAYIGFDCTATSLHIGSLMQIMILRLLQQHGHKPIVIIGGGTSKIGDPTWKDEVRKILSKEDIAKNAEGIKKSLSKFIKFGDGKSDAIMLDNAEWLDSFNYLDFLRDFGSYFSVNRMLTMDSVKLRLEREQHLSFLEFNYMLLQAYDFYYLSKHYNCSLQLGGSDQWGNIVMGADLIRKISGKEVFGMTTPLLTTSSGAKMGKTAAGAVWLNEDLLSPYDYYQYWRNCEDADIVRFAKLYSEFTQEELNRFESLAAEDINAAKKQLAYELTKLCHSEQAAKSALETAVKIFEEGQIDENLPTVVLEQEVLQAGISAYELFHEAGLATSKSEARKLIRGNGAKINDRLVEDENMIINTNFLLDKKVIKLSAGKKKHILVRV.

An L-tyrosine-binding site is contributed by Y34. The 'HIGH' region motif lies at 39–48 (CTATSLHIGS). L-tyrosine-binding residues include Y171 and Q175. The 'KMSKS' region motif lies at 231-235 (KMGKT). K234 contributes to the ATP binding site. Residues 345–411 (ISAYELFHEA…GKKKHILVRV (67 aa)) enclose the S4 RNA-binding domain.

Belongs to the class-I aminoacyl-tRNA synthetase family. TyrS type 1 subfamily. Homodimer.

The protein localises to the cytoplasm. It catalyses the reaction tRNA(Tyr) + L-tyrosine + ATP = L-tyrosyl-tRNA(Tyr) + AMP + diphosphate + H(+). Catalyzes the attachment of tyrosine to tRNA(Tyr) in a two-step reaction: tyrosine is first activated by ATP to form Tyr-AMP and then transferred to the acceptor end of tRNA(Tyr). This chain is Tyrosine--tRNA ligase, found in Rickettsia conorii (strain ATCC VR-613 / Malish 7).